The primary structure comprises 469 residues: L-seryl-tRNA(Sec) selenium transferase (469 aa).

Lys298 carries the N6-(pyridoxal phosphate)lysine modification.

It belongs to the SelA family. Pyridoxal 5'-phosphate is required as a cofactor.

The protein localises to the cytoplasm. It carries out the reaction L-seryl-tRNA(Sec) + selenophosphate + H(+) = L-selenocysteinyl-tRNA(Sec) + phosphate. Its pathway is aminoacyl-tRNA biosynthesis; selenocysteinyl-tRNA(Sec) biosynthesis; selenocysteinyl-tRNA(Sec) from L-seryl-tRNA(Sec) (bacterial route): step 1/1. Converts seryl-tRNA(Sec) to selenocysteinyl-tRNA(Sec) required for selenoprotein biosynthesis. This Nitratidesulfovibrio vulgaris (strain ATCC 29579 / DSM 644 / CCUG 34227 / NCIMB 8303 / VKM B-1760 / Hildenborough) (Desulfovibrio vulgaris) protein is L-seryl-tRNA(Sec) selenium transferase.